The primary structure comprises 486 residues: MTFIEGKTEKWEYVIGLEIHAQIKSNAKLFSSASTEFGSSPNSQVELLDAAMPGSLPVLNEFCVHQAIKTALGINAKINKLSIFDRKNYFYADLPAGYQISQFYHPIAQGGWIEILDENGNIKCIQINRLHIEQDTGKSTHDQSDTYSYIDLNRSGIALMEIVSEPDISSPMQAAEYIKKLRAILRYLDSCNGDMEKGALRCDANISVRKPNSELGTKCEIKNLNSIKSIVRALEFEGQRQVNILESGGTVKQESLLFDATLGKTFPMRSKENATDYRYFPDPDLPPIILDQSLIDNIASSLPELPDAKITRYVNEIKLSDYNAQVLAADKDISCFFEEVIKTANPILTANWILSELFGLMNKDGITINECKITANHFSELIQLISSKAISSKIAKTVLKEMFDSGKSPKIIMQEKNIQQISDPNQIADIIDDVLKDNYQSVVSYRNGKDRLFGFFVGQVMKKTAGNANPELINEILHTKLKQFQI.

This sequence belongs to the GatB/GatE family. GatB subfamily. Heterotrimer of A, B and C subunits.

The enzyme catalyses L-glutamyl-tRNA(Gln) + L-glutamine + ATP + H2O = L-glutaminyl-tRNA(Gln) + L-glutamate + ADP + phosphate + H(+). It carries out the reaction L-aspartyl-tRNA(Asn) + L-glutamine + ATP + H2O = L-asparaginyl-tRNA(Asn) + L-glutamate + ADP + phosphate + 2 H(+). Functionally, allows the formation of correctly charged Asn-tRNA(Asn) or Gln-tRNA(Gln) through the transamidation of misacylated Asp-tRNA(Asn) or Glu-tRNA(Gln) in organisms which lack either or both of asparaginyl-tRNA or glutaminyl-tRNA synthetases. The reaction takes place in the presence of glutamine and ATP through an activated phospho-Asp-tRNA(Asn) or phospho-Glu-tRNA(Gln). The chain is Aspartyl/glutamyl-tRNA(Asn/Gln) amidotransferase subunit B from Orientia tsutsugamushi (strain Boryong) (Rickettsia tsutsugamushi).